We begin with the raw amino-acid sequence, 385 residues long: ATP phosphoribosyltransferase regulatory subunit (385 aa).

Belongs to the class-II aminoacyl-tRNA synthetase family. HisZ subfamily. As to quaternary structure, heteromultimer composed of HisG and HisZ subunits.

Its subcellular location is the cytoplasm. It functions in the pathway amino-acid biosynthesis; L-histidine biosynthesis; L-histidine from 5-phospho-alpha-D-ribose 1-diphosphate: step 1/9. In terms of biological role, required for the first step of histidine biosynthesis. May allow the feedback regulation of ATP phosphoribosyltransferase activity by histidine. The polypeptide is ATP phosphoribosyltransferase regulatory subunit (Bordetella parapertussis (strain 12822 / ATCC BAA-587 / NCTC 13253)).